The sequence spans 423 residues: Peroxisomal membrane protein PMP47A (423 aa).

3 Solcar repeats span residues 6-120, 142-230, and 239-373; these read YDDL…TGKT, LSVW…LKSF, and ITPV…LLIL. The helical transmembrane segment at 12-32 threads the bilayer; the sequence is AFAGAGGGLLSMTLTYPLVTL. Residues 43–53 show a composition bias toward basic and acidic residues; sequence KKDQEKEKENS. Positions 43 to 70 are disordered; it reads KKDQEKEKENSNEDGSLSPKSSNTSDVS. Positions 55–70 are enriched in polar residues; it reads EDGSLSPKSSNTSDVS. Helical transmembrane passes span 98-118, 148-168, 204-224, and 245-265; these read SALFGIAVTNFVYYYFYELTG, MAAGAVAGTISRVATNPIWVA, FTGIVPALFLVLNPIIQYTIF, and LLLGAFGKLIATIITYPYITL. The interval 278–308 is disordered; that stretch reads SEDVEKERTDSVQSLPEDGSDEDNLKENSAK. A helical transmembrane segment spans residues 353–373; that stretch reads LLQSILNAAFLFYFKEELLIL.

It belongs to the mitochondrial carrier (TC 2.A.29) family.

It localises to the peroxisome membrane. In terms of biological role, may have transport activity. The polypeptide is Peroxisomal membrane protein PMP47A (PMP47A) (Candida boidinii (Yeast)).